A 196-amino-acid polypeptide reads, in one-letter code: MFSILKQVGDYAKGTVEAAKYIGQGLSVTFDHMRRRPVTVQYPYEKLIPSERYRGRIHFEFDKCIACEVCVRVCPINLPVVDWEFNKDAKKKELKHYSIDFGVCIFCGNCVEYCPTNCLSMTEEYELAAYDRHELNYDNVALGRLPYKVTQDPMVTPLRELGYLPKGVMSPHDLPEGSQRSGKRPEEIIEEAEASS.

2 consecutive 4Fe-4S ferredoxin-type domains span residues 55 to 84 (GRIHFEFDKCIACEVCVRVCPINLPVVDWE) and 95 to 124 (KHYSIDFGVCIFCGNCVEYCPTNCLSMTEE). Positions 64, 67, 70, 74, 104, 107, 110, and 114 each coordinate [4Fe-4S] cluster. The disordered stretch occupies residues 170–196 (SPHDLPEGSQRSGKRPEEIIEEAEASS).

Belongs to the complex I 23 kDa subunit family. As to quaternary structure, NDH-1 is composed of at least 11 different subunits. [4Fe-4S] cluster is required as a cofactor.

The protein localises to the cellular thylakoid membrane. It carries out the reaction a plastoquinone + NADH + (n+1) H(+)(in) = a plastoquinol + NAD(+) + n H(+)(out). It catalyses the reaction a plastoquinone + NADPH + (n+1) H(+)(in) = a plastoquinol + NADP(+) + n H(+)(out). Functionally, NDH-1 shuttles electrons from an unknown electron donor, via FMN and iron-sulfur (Fe-S) centers, to quinones in the respiratory and/or the photosynthetic chain. The immediate electron acceptor for the enzyme in this species is believed to be plastoquinone. Couples the redox reaction to proton translocation, and thus conserves the redox energy in a proton gradient. The polypeptide is NAD(P)H-quinone oxidoreductase subunit I (Crocosphaera subtropica (strain ATCC 51142 / BH68) (Cyanothece sp. (strain ATCC 51142))).